The sequence spans 192 residues: Fe/S biogenesis protein NfuA (192 aa).

Residues C149 and C152 each contribute to the [4Fe-4S] cluster site.

Belongs to the NfuA family. Homodimer. [4Fe-4S] cluster serves as cofactor.

Its function is as follows. Involved in iron-sulfur cluster biogenesis. Binds a 4Fe-4S cluster, can transfer this cluster to apoproteins, and thereby intervenes in the maturation of Fe/S proteins. Could also act as a scaffold/chaperone for damaged Fe/S proteins. This Aeromonas salmonicida (strain A449) protein is Fe/S biogenesis protein NfuA.